A 278-amino-acid chain; its full sequence is Maltodextrin transport system permease protein MdxG (278 aa).

Transmembrane regions (helical) follow at residues 12–32, 74–94, 108–128, 131–151, 183–203, and 242–262; these read ICTYLFLTLLSIVIIYPLLIT, TLVIALSVMVLQVTIVTLAGY, LIFFLIIQMVPTMAALTAFYV, MLIGALDQYWFLTAIYIGGGI, IFASIVLPLVKPMLAVQALWA, and VALFAAGAILAALPICVLFFF. The ABC transmembrane type-1 domain maps to 71-263; it reads YSNTLVIALS…LPICVLFFFL (193 aa).

This sequence belongs to the binding-protein-dependent transport system permease family. MalFG subfamily. In terms of assembly, the complex is composed of two ATP-binding proteins (MsmX), two transmembrane proteins (MdxF and MdxG) and a solute-binding protein (MdxE).

The protein localises to the cell membrane. Functionally, part of the ABC transporter complex involved in maltodextrin import. Probably responsible for the translocation of the substrate across the membrane. This Bacillus subtilis (strain 168) protein is Maltodextrin transport system permease protein MdxG (mdxG).